Reading from the N-terminus, the 144-residue chain is Gas vesicle protein I1 (144 aa).

The tract at residues 1-144 (MSDKQQQKHK…SPTEDEVNDE (144 aa)) is disordered. Composition is skewed to basic residues over residues 7–17 (QKHKQKARQAR) and 26–46 (KARRNLLRQREKLARRRTRNR). Over residues 75 to 94 (MPPQKSNAENAVRNSHSTVP) the composition is skewed to polar residues. A compositionally biased stretch (low complexity) spans 122–136 (SEASAPSDESASGSP).

This sequence belongs to the gas vesicle GvpI family. In terms of assembly, gvpF to GvpM interact with each other in vitro, and may form multi-subunit complex(es). Interacts with GvpC1 and GvpO.

It is found in the gas vesicle. Proteins GvpF to GvpM might be involved in nucleating gas vesicle formation. A minor component of the gas vesicle. Gas vesicles are hollow, gas filled proteinaceous nanostructures found in several microbial planktonic microorganisms. They allow positioning of halobacteria at the optimal depth for growth in the poorly aerated, shallow brine pools of their habitat. In terms of biological role, expression of a 9.5 kb p-vac DNA fragment containing 2 divergently transcribed regions (gvpD-gvpE-gvpF-gvpG-gvpH-gvpI-gvpJ-gvpK-gvpL-gvpM and gvpA-gvpC-gvpN-gvpO) allows H.volcanii to produce gas vesicles. A similar region restores gas vesicle production in H.halobium without the p-vac locus, but it still has the c-vac locus. This Halobacterium salinarum (strain ATCC 700922 / JCM 11081 / NRC-1) (Halobacterium halobium) protein is Gas vesicle protein I1 (gvpI11).